A 236-amino-acid polypeptide reads, in one-letter code: Protein-L-isoaspartate O-methyltransferase 1 (236 aa).

S85 is a catalytic residue.

Belongs to the methyltransferase superfamily. L-isoaspartyl/D-aspartyl protein methyltransferase family.

Its subcellular location is the cytoplasm. It catalyses the reaction [protein]-L-isoaspartate + S-adenosyl-L-methionine = [protein]-L-isoaspartate alpha-methyl ester + S-adenosyl-L-homocysteine. Its function is as follows. Catalyzes the methyl esterification of L-isoaspartyl residues in peptides and proteins that result from spontaneous decomposition of normal L-aspartyl and L-asparaginyl residues. It plays a role in the repair and/or degradation of damaged proteins. In Polaromonas sp. (strain JS666 / ATCC BAA-500), this protein is Protein-L-isoaspartate O-methyltransferase 1.